Consider the following 582-residue polypeptide: Methionine--tRNA ligase (582 aa).

A 'HIGH' region motif is present at residues 24 to 34; the sequence is PYIYAVPHLGN. Zn(2+)-binding residues include cysteine 156, cysteine 159, cysteine 169, and cysteine 172. The 'KMSKS' region signature appears at 346 to 350; the sequence is KFSKS. Lysine 349 contributes to the ATP binding site.

Belongs to the class-I aminoacyl-tRNA synthetase family. MetG type 1 subfamily. Zn(2+) serves as cofactor.

Its subcellular location is the cytoplasm. The catalysed reaction is tRNA(Met) + L-methionine + ATP = L-methionyl-tRNA(Met) + AMP + diphosphate. Functionally, is required not only for elongation of protein synthesis but also for the initiation of all mRNA translation through initiator tRNA(fMet) aminoacylation. The sequence is that of Methionine--tRNA ligase from Caldivirga maquilingensis (strain ATCC 700844 / DSM 13496 / JCM 10307 / IC-167).